The primary structure comprises 478 residues: Ribulose bisphosphate carboxylase large chain (478 aa).

Positions 1–2 are excised as a propeptide; sequence MS. Position 3 is an N-acetylproline (P3). K14 is subject to N6,N6,N6-trimethyllysine. Substrate-binding residues include N123 and T173. K175 serves as the catalytic Proton acceptor. K177 lines the substrate pocket. Positions 201, 203, and 204 each coordinate Mg(2+). Position 201 is an N6-carboxylysine (K201). The Proton acceptor role is filled by H294. Residues R295, H327, and S379 each contribute to the substrate site.

This sequence belongs to the RuBisCO large chain family. Type I subfamily. As to quaternary structure, heterohexadecamer of 8 large chains and 8 small chains; disulfide-linked. The disulfide link is formed within the large subunit homodimers. Mg(2+) serves as cofactor. The disulfide bond which can form in the large chain dimeric partners within the hexadecamer appears to be associated with oxidative stress and protein turnover.

It is found in the plastid. The protein localises to the chloroplast. It catalyses the reaction 2 (2R)-3-phosphoglycerate + 2 H(+) = D-ribulose 1,5-bisphosphate + CO2 + H2O. It carries out the reaction D-ribulose 1,5-bisphosphate + O2 = 2-phosphoglycolate + (2R)-3-phosphoglycerate + 2 H(+). Functionally, ruBisCO catalyzes two reactions: the carboxylation of D-ribulose 1,5-bisphosphate, the primary event in carbon dioxide fixation, as well as the oxidative fragmentation of the pentose substrate in the photorespiration process. Both reactions occur simultaneously and in competition at the same active site. The sequence is that of Ribulose bisphosphate carboxylase large chain from Neurachne munroi.